Here is a 394-residue protein sequence, read N- to C-terminus: Elongation factor Tu (394 aa).

One can recognise a tr-type G domain in the interval 10-204; it reads KEHANIGTIG…AVDDYIPTPE (195 aa). Positions 19–26 are G1; sequence GHVDHGKT. 19–26 contributes to the GTP binding site; it reads GHVDHGKT. Thr-26 contributes to the Mg(2+) binding site. Residues 60–64 are G2; the sequence is GITIN. Residues 81 to 84 form a G3 region; the sequence is DCPG. GTP is bound by residues 81-85 and 136-139; these read DCPGH and NKVD. Residues 136 to 139 are G4; that stretch reads NKVD. Residues 174 to 176 are G5; that stretch reads SAL.

It belongs to the TRAFAC class translation factor GTPase superfamily. Classic translation factor GTPase family. EF-Tu/EF-1A subfamily. Monomer.

It is found in the cytoplasm. The enzyme catalyses GTP + H2O = GDP + phosphate + H(+). In terms of biological role, GTP hydrolase that promotes the GTP-dependent binding of aminoacyl-tRNA to the A-site of ribosomes during protein biosynthesis. The protein is Elongation factor Tu of Staphylococcus epidermidis (strain ATCC 35984 / DSM 28319 / BCRC 17069 / CCUG 31568 / BM 3577 / RP62A).